A 421-amino-acid chain; its full sequence is Adenylosuccinate synthetase (421 aa).

GTP-binding positions include 11–17 and 39–41; these read GDEGKGK and GHT. The active-site Proton acceptor is the aspartate 12. Residues aspartate 12 and glycine 39 each coordinate Mg(2+). IMP is bound by residues 12–15, 37–40, threonine 129, arginine 143, asparagine 219, threonine 234, and arginine 298; these read DEGK and NAGH. Histidine 40 acts as the Proton donor in catalysis. Residue 294 to 300 coordinates substrate; it reads VTTGRRR. Residues arginine 300, 326 to 328, and 409 to 411 contribute to the GTP site; these read KLD and GTG.

The protein belongs to the adenylosuccinate synthetase family. Homodimer. The cofactor is Mg(2+).

Its subcellular location is the cytoplasm. It catalyses the reaction IMP + L-aspartate + GTP = N(6)-(1,2-dicarboxyethyl)-AMP + GDP + phosphate + 2 H(+). The protein operates within purine metabolism; AMP biosynthesis via de novo pathway; AMP from IMP: step 1/2. Its function is as follows. Plays an important role in the de novo pathway and in the salvage pathway of purine nucleotide biosynthesis. Catalyzes the first committed step in the biosynthesis of AMP from IMP. The protein is Adenylosuccinate synthetase of Paracoccidioides lutzii (strain ATCC MYA-826 / Pb01) (Paracoccidioides brasiliensis).